The primary structure comprises 804 residues: Probable replication endonuclease from prophage-like region (804 aa).

Active-site O-(5'-phospho-DNA)-tyrosine intermediate residues include tyrosine 498 and tyrosine 502.

The protein belongs to the phage GPA family.

Its function is as follows. Possible endonuclease which induces a single-strand cut and initiates DNA replication. This is Probable replication endonuclease from prophage-like region from Escherichia coli O6:H1 (strain CFT073 / ATCC 700928 / UPEC).